Here is a 404-residue protein sequence, read N- to C-terminus: MKLPIYLDYSATTPVDPRVAEKMMQFLTMDGTFGNPASRSHRFGWQAEEAVDIARNQVADLIGADPREIVFTSGATESDNLAIKGAANFYQKKGKHIITSKTEHKAVLDTCRQLEREGFEVTYLAPQSNGIIDLKELEAAMRDDTILVSIMHVNNEIGVVQDIATIGEMCRARGIIYHVDATQSVGKLPIDLTQLKVDLMSFTGHKIYGPKGIGALYVRRKPRIRIEAQMHGGGHERGMRSGTLPVHQIVGMGEAYRIAKEEMASEMERLRGLRNRLWNGIKDIEEVYLNGDLEQGVPTILNVSFNYVEGESLIMALKDLAVSSGSACTSASLEPSYVLRALGMNDELAHSSIRFSLGRFTTEEEIDYTIELVRKSIGRLRDLSPLWEMFKQGVDLTTIEWAHH.

Pyridoxal 5'-phosphate is bound by residues 75 to 76 (AT), Asn-155, Gln-183, and 203 to 205 (TGH). Lys-206 is modified (N6-(pyridoxal phosphate)lysine). Position 243 (Thr-243) interacts with pyridoxal 5'-phosphate. The Cysteine persulfide intermediate role is filled by Cys-328. [2Fe-2S] cluster is bound at residue Cys-328.

This sequence belongs to the class-V pyridoxal-phosphate-dependent aminotransferase family. NifS/IscS subfamily. As to quaternary structure, homodimer. Forms a heterotetramer with IscU, interacts with other sulfur acceptors. Requires pyridoxal 5'-phosphate as cofactor.

The protein resides in the cytoplasm. It carries out the reaction (sulfur carrier)-H + L-cysteine = (sulfur carrier)-SH + L-alanine. It functions in the pathway cofactor biosynthesis; iron-sulfur cluster biosynthesis. Functionally, master enzyme that delivers sulfur to a number of partners involved in Fe-S cluster assembly, tRNA modification or cofactor biosynthesis. Catalyzes the removal of elemental sulfur atoms from cysteine to produce alanine. Functions as a sulfur delivery protein for Fe-S cluster synthesis onto IscU, an Fe-S scaffold assembly protein, as well as other S acceptor proteins. The protein is Cysteine desulfurase IscS of Cronobacter sakazakii (strain ATCC BAA-894) (Enterobacter sakazakii).